Consider the following 484-residue polypeptide: Cobyric acid synthase (484 aa).

Residues 248-435 form the GATase cobBQ-type domain; sequence VLKVIVPVLP…LHGLFEGSQS (188 aa). Catalysis depends on C329, which acts as the Nucleophile. Residue H427 is part of the active site.

The protein belongs to the CobB/CobQ family. CobQ subfamily.

It participates in cofactor biosynthesis; adenosylcobalamin biosynthesis. Its function is as follows. Catalyzes amidations at positions B, D, E, and G on adenosylcobyrinic A,C-diamide. NH(2) groups are provided by glutamine, and one molecule of ATP is hydrogenolyzed for each amidation. The chain is Cobyric acid synthase from Pseudomonas putida (strain ATCC 700007 / DSM 6899 / JCM 31910 / BCRC 17059 / LMG 24140 / F1).